Here is a 238-residue protein sequence, read N- to C-terminus: tRNA (guanine-N(7)-)-methyltransferase (238 aa).

Residues Glu-68, Glu-93, Asp-120, and Asp-143 each coordinate S-adenosyl-L-methionine. Asp-143 is a catalytic residue. Residues Lys-147, Asp-179, and 216–219 contribute to the substrate site; that span reads TKFE.

Belongs to the class I-like SAM-binding methyltransferase superfamily. TrmB family.

The catalysed reaction is guanosine(46) in tRNA + S-adenosyl-L-methionine = N(7)-methylguanosine(46) in tRNA + S-adenosyl-L-homocysteine. The protein operates within tRNA modification; N(7)-methylguanine-tRNA biosynthesis. Catalyzes the formation of N(7)-methylguanine at position 46 (m7G46) in tRNA. In Aliivibrio fischeri (strain MJ11) (Vibrio fischeri), this protein is tRNA (guanine-N(7)-)-methyltransferase.